Here is a 48-residue protein sequence, read N- to C-terminus: Delta-stichotoxin-She1a (48 aa).

3 cysteine pairs are disulfide-bonded: C3–C43, C5–C33, and C26–C44.

It belongs to the sea anemone sodium channel inhibitory toxin family. Type II subfamily.

The protein resides in the secreted. The protein localises to the nematocyst. Its function is as follows. Binds specifically to voltage-gated sodium channels (Nav), thereby delaying their inactivation during signal transduction. Is highly toxic to crabs (by intrahemocoelic injection), but without effect upon mice (by intraperitoneal injection). The chain is Delta-stichotoxin-She1a from Stichodactyla helianthus (Sun anemone).